Consider the following 588-residue polypeptide: Phomenoic acid biosynthesis cluster cytochrome P450 monooxygenase (588 aa).

Residues Met-1–Lys-21 form the signal peptide. Asn-293 is a glycosylation site (N-linked (GlcNAc...) asparagine). Over residues His-467–Phe-486 the composition is skewed to basic and acidic residues. The segment at His-467 to Arg-490 is disordered. Cys-519 provides a ligand contact to heme.

It belongs to the cytochrome P450 family. The cofactor is heme.

It participates in secondary metabolite biosynthesis. In terms of biological role, cytochrome P450 monooxygenase; part of the gene cluster that mediates the biosynthesis of phomenoic acid, a long chain aliphatic carboxylic acid that does not appear to be essential for pathogenicity but may play a role in allowing to outcompete other fungi in the environmental niche via its antifungal properties. The polyketide synthase produces the long methylated aliphatic carboxylic acid chain of phomenoic acid. The cluster-specific cytochrome P450 monooxygenase may then hydroxylate the methyl group of carbon 31. The putative dehydrogenase YogA, which has no obvious role in phomenoic acid biosynthesis, may further modify phomenoic acid to produce a compound not identified yet. In Leptosphaeria maculans (strain JN3 / isolate v23.1.3 / race Av1-4-5-6-7-8) (Blackleg fungus), this protein is Phomenoic acid biosynthesis cluster cytochrome P450 monooxygenase.